The primary structure comprises 391 residues: Probable sugar efflux transporter (391 aa).

A run of 12 helical transmembrane segments spans residues 16–36, 51–71, 82–102, 110–130, 138–158, 170–190, 210–230, 247–267, 277–297, 300–320, 338–358, and 361–381; these read VFVF…PVAL, VGLM…PLML, LLFL…AWNF, MGIA…VIRV, QALG…LPLG, TFGV…KLLP, PLLM…FTTY, ITTL…FLFG, FIAF…VFKN, WVVF…GISL, IYSG…SIVI, and LGLG…LFWL.

The protein belongs to the major facilitator superfamily. SotB (TC 2.A.1.2) family.

The protein resides in the cell inner membrane. Involved in the efflux of sugars. The physiological role may be the reduction of the intracellular concentration of toxic sugars or sugar metabolites. The chain is Probable sugar efflux transporter from Helicobacter pylori (strain ATCC 700392 / 26695) (Campylobacter pylori).